Reading from the N-terminus, the 292-residue chain is Forkhead box protein R1 (292 aa).

Disordered regions lie at residues 31–50 (PPKL…PDYE) and 65–166 (PGKL…ASSQ). Basic and acidic residues-rich tracts occupy residues 35-47 (PLEK…KDGP) and 70-79 (VSGRRKREDL). Residues 80-89 (TSTLPSSQPP) are compositionally biased toward polar residues. Residues 129-140 (LTEEEEAEDQED) are compositionally biased toward acidic residues. The segment covering 149 to 161 (PHKRAPLQSRRLR) has biased composition (basic residues). The segment at residues 173 to 272 (RPPLNYFHLI…EEARALASTR (100 aa)) is a DNA-binding region (fork-head).

As to expression, expressed in testis (at protein level).

The protein resides in the nucleus. The protein localises to the cytoplasm. It is found in the perinuclear region. In terms of biological role, transcription factor which acts as both an activator and a repressor. Activates transcription of a number of genes including the heat shock chaperones HSPA1A and HSPA6 and the antioxidant NADPH-dependent reductase DHRS2 which are involved in protection against oxidative stress. Required for normal brain development. The polypeptide is Forkhead box protein R1 (FOXR1) (Homo sapiens (Human)).